The primary structure comprises 161 residues: Phosphopantetheine adenylyltransferase (161 aa).

A substrate-binding site is contributed by Thr9. ATP is bound by residues 9-10 (TF) and His17. Substrate is bound by residues Lys41, Leu73, and Arg87. ATP contacts are provided by residues 88 to 90 (GLR), Glu98, and 123 to 129 (YQFISGT).

It belongs to the bacterial CoaD family. Homohexamer. It depends on Mg(2+) as a cofactor.

The protein resides in the cytoplasm. It carries out the reaction (R)-4'-phosphopantetheine + ATP + H(+) = 3'-dephospho-CoA + diphosphate. It participates in cofactor biosynthesis; coenzyme A biosynthesis; CoA from (R)-pantothenate: step 4/5. Reversibly transfers an adenylyl group from ATP to 4'-phosphopantetheine, yielding dephospho-CoA (dPCoA) and pyrophosphate. The protein is Phosphopantetheine adenylyltransferase of Janthinobacterium sp. (strain Marseille) (Minibacterium massiliensis).